The chain runs to 100 residues: Urease subunit gamma (100 aa).

The protein belongs to the urease gamma subunit family. In terms of assembly, heterotrimer of UreA (gamma), UreB (beta) and UreC (alpha) subunits. Three heterotrimers associate to form the active enzyme.

It is found in the cytoplasm. It carries out the reaction urea + 2 H2O + H(+) = hydrogencarbonate + 2 NH4(+). It participates in nitrogen metabolism; urea degradation; CO(2) and NH(3) from urea (urease route): step 1/1. This is Urease subunit gamma from Bradyrhizobium diazoefficiens (strain JCM 10833 / BCRC 13528 / IAM 13628 / NBRC 14792 / USDA 110).